Here is a 248-residue protein sequence, read N- to C-terminus: Fasciclin-like arabinogalactan protein 19 (248 aa).

An N-terminal signal peptide occupies residues 1 to 29 (MAKISSASCFRAIFLGALIILCLPHPSTG). The FAS1 domain maps to 35 to 166 (LERAIAILRV…IAVHGLADLL (132 aa)). Asn114 and Asn136 each carry an N-linked (GlcNAc...) asparagine glycan. Over residues 213–226 (SPSVEEVSPSPSWG) the composition is skewed to low complexity. Positions 213 to 248 (SPSVEEVSPSPSWGEGEEDFIVGDEGGPLDGRNNGF) are disordered.

It belongs to the fasciclin-like AGP family.

It localises to the secreted. Functionally, may be a cell surface adhesion protein. This Arabidopsis thaliana (Mouse-ear cress) protein is Fasciclin-like arabinogalactan protein 19 (FLA19).